A 528-amino-acid polypeptide reads, in one-letter code: GMP synthase [glutamine-hydrolyzing] (528 aa).

Residues 13 to 204 (AIVILDFGSQ…VNHICGCEQD (192 aa)) enclose the Glutamine amidotransferase type-1 domain. Cys90 acts as the Nucleophile in catalysis. Active-site residues include His178 and Glu180. The GMPS ATP-PPase domain occupies 205-403 (WTTNAFIDEA…LGLPEEIVRR (199 aa)). 232–238 (SGGVDSS) provides a ligand contact to ATP.

In terms of assembly, homodimer.

It carries out the reaction XMP + L-glutamine + ATP + H2O = GMP + L-glutamate + AMP + diphosphate + 2 H(+). It participates in purine metabolism; GMP biosynthesis; GMP from XMP (L-Gln route): step 1/1. Its function is as follows. Catalyzes the synthesis of GMP from XMP. This is GMP synthase [glutamine-hydrolyzing] from Synechococcus sp. (strain CC9902).